The following is a 192-amino-acid chain: Imidazole glycerol phosphate synthase subunit HisH (192 aa).

Residues 1 to 192 (MIVIVDYGLG…QAIQGGFIND (192 aa)) form the Glutamine amidotransferase type-1 domain. Catalysis depends on Cys77, which acts as the Nucleophile. Residues His169 and Glu171 contribute to the active site.

As to quaternary structure, heterodimer of HisH and HisF.

It localises to the cytoplasm. The catalysed reaction is 5-[(5-phospho-1-deoxy-D-ribulos-1-ylimino)methylamino]-1-(5-phospho-beta-D-ribosyl)imidazole-4-carboxamide + L-glutamine = D-erythro-1-(imidazol-4-yl)glycerol 3-phosphate + 5-amino-1-(5-phospho-beta-D-ribosyl)imidazole-4-carboxamide + L-glutamate + H(+). The enzyme catalyses L-glutamine + H2O = L-glutamate + NH4(+). It participates in amino-acid biosynthesis; L-histidine biosynthesis; L-histidine from 5-phospho-alpha-D-ribose 1-diphosphate: step 5/9. Functionally, IGPS catalyzes the conversion of PRFAR and glutamine to IGP, AICAR and glutamate. The HisH subunit catalyzes the hydrolysis of glutamine to glutamate and ammonia as part of the synthesis of IGP and AICAR. The resulting ammonia molecule is channeled to the active site of HisF. This chain is Imidazole glycerol phosphate synthase subunit HisH, found in Staphylococcus aureus (strain bovine RF122 / ET3-1).